The sequence spans 404 residues: UBP1-associated protein 2C (404 aa).

Residues 1–29 (MDMMKKRKLDENGNGLNTNGGGTIGPTRL) form a disordered region. 2 consecutive RRM domains span residues 75 to 152 (RKLF…LAAS) and 167 to 248 (RKIY…GKKG). Disordered regions lie at residues 246 to 270 (KKGGKPGMPQAQDGGSGHGHVHGEG) and 344 to 404 (GSGQ…PPNY).

As to expression, expressed in root apical and lateral meristems, young leaves and embryos.

The protein resides in the nucleus. Heterogeneous nuclear ribonucleoprotein (hnRNP)-like protein that acts as a component of a complex regulating the turnover of mRNAs in the nucleus. Binds with high affinity to RNA molecules that contain U-rich sequences in 3'-UTRs. May function in complex with UBP1 and contribute to the stabilization of mRNAs in the nucleus. The chain is UBP1-associated protein 2C (UBA2C) from Arabidopsis thaliana (Mouse-ear cress).